A 585-amino-acid chain; its full sequence is Switch-associated protein 70 (585 aa).

One can recognise a PH domain in the interval 210 to 306 (DVLKQGYMIK…WIQAIHSTIH (97 aa)). Residues 316 to 532 (HKEARQRRKE…KLEMAAKMTK (217 aa)) are a coiled coil.

As to quaternary structure, the SWAP complex consists of NPM1, NCL, PARP1 and SWAP70. In terms of processing, tyrosine-phosphorylated.

The protein localises to the cytoplasm. It localises to the cell membrane. It is found in the nucleus. Its subcellular location is the cell projection. The protein resides in the lamellipodium. In terms of biological role, phosphatidylinositol 3,4,5-trisphosphate-dependent guanine nucleotide exchange factor (GEF) which, independently of RAS, transduces signals from tyrosine kinase receptors to RAC. It also mediates signaling of membrane ruffling. Regulates the actin cytoskeleton as an effector or adapter protein in response to agonist stimulated phosphatidylinositol (3,4)-bisphosphate production and cell protrusion. The polypeptide is Switch-associated protein 70 (SWAP70) (Bos taurus (Bovine)).